The primary structure comprises 344 residues: S-adenosylmethionine:tRNA ribosyltransferase-isomerase (344 aa).

The protein belongs to the QueA family. As to quaternary structure, monomer.

Its subcellular location is the cytoplasm. The enzyme catalyses 7-aminomethyl-7-carbaguanosine(34) in tRNA + S-adenosyl-L-methionine = epoxyqueuosine(34) in tRNA + adenine + L-methionine + 2 H(+). It participates in tRNA modification; tRNA-queuosine biosynthesis. Its function is as follows. Transfers and isomerizes the ribose moiety from AdoMet to the 7-aminomethyl group of 7-deazaguanine (preQ1-tRNA) to give epoxyqueuosine (oQ-tRNA). This is S-adenosylmethionine:tRNA ribosyltransferase-isomerase from Nitrosococcus oceani (strain ATCC 19707 / BCRC 17464 / JCM 30415 / NCIMB 11848 / C-107).